The following is a 436-amino-acid chain: DEAD-box ATP-dependent RNA helicase CshB (436 aa).

The Q motif motif lies at 4 to 32 (QTFTQYDFKPFLIDAVRELRFTEPTGIQQ). The Helicase ATP-binding domain maps to 35 to 209 (FPVVKKGVSV…KKYMENPEHI (175 aa)). 48–55 (SQTGSGKT) contributes to the ATP binding site. The DEAD box signature appears at 157 to 160 (DEAD). The Helicase C-terminal domain maps to 240–388 (MLLQFKPYLA…WADLGERRRR (149 aa)). The segment at 385 to 436 (RRRRKSRKKPNDELDVMATKVIKKPKKVKPNYKRKLATERDKVKRKYSNKKR) is disordered. Basic residues-rich tracts occupy residues 405-419 (VIKKPKKVKPNYKRK) and 427-436 (VKRKYSNKKR).

This sequence belongs to the DEAD box helicase family. CshB subfamily.

Its subcellular location is the cytoplasm. It carries out the reaction ATP + H2O = ADP + phosphate + H(+). In terms of biological role, probable DEAD-box RNA helicase. May work in conjunction with the cold shock proteins to ensure proper initiation of transcription at low and optimal temperatures. Unwinds dsRNA in both 5'- and 3'-directions and shows RNA-dependent ATPase activity. Probably has a somewhat redundant function with CshA, as cshA can partially complement the growth effects of a cshB deletion. In Bacillus cereus (strain ATCC 14579 / DSM 31 / CCUG 7414 / JCM 2152 / NBRC 15305 / NCIMB 9373 / NCTC 2599 / NRRL B-3711), this protein is DEAD-box ATP-dependent RNA helicase CshB.